Reading from the N-terminus, the 87-residue chain is Acyl-CoA-binding protein (87 aa).

Ser-2 is modified (N-acetylserine). Residues 2-87 (SQADFDKAAE…VEELKKKYGI (86 aa)) form the ACB domain. An N6-acetyllysine; alternate modification is found at Lys-8. Residue Lys-8 is modified to N6-succinyllysine; alternate. Lys-14 contacts an acyl-CoA. An N6-succinyllysine modification is found at Lys-17. Residue Tyr-29 is modified to Phosphotyrosine. An acyl-CoA-binding positions include 29–33 (YSHFK), Lys-51, Lys-55, and Tyr-74. Lys-51 carries the post-translational modification N6-acetyllysine. Lys-55 bears the N6-acetyllysine; alternate mark. An N6-succinyllysine; alternate modification is found at Lys-55. Lys-55 bears the N6-(2-hydroxyisobutyryl)lysine; alternate mark. N6-malonyllysine; alternate is present on Lys-55. N6-acetyllysine; alternate is present on Lys-77. Lys-77 carries the N6-succinyllysine; alternate modification.

It belongs to the ACBP family. As to quaternary structure, monomer.

The protein resides in the endoplasmic reticulum. It localises to the golgi apparatus. In terms of biological role, binds medium- and long-chain acyl-CoA esters with very high affinity and may function as an intracellular carrier of acyl-CoA esters. It is also able to displace diazepam from the benzodiazepine (BZD) recognition site located on the GABA type A receptor. It is therefore possible that this protein also acts as a neuropeptide to modulate the action of the GABA receptor. This Rattus norvegicus (Rat) protein is Acyl-CoA-binding protein (Dbi).